The following is a 652-amino-acid chain: O-fucosyltransferase 15 (652 aa).

Residues threonine 91–serine 111 form a helical; Signal-anchor for type II membrane protein membrane-spanning segment. N-linked (GlcNAc...) asparagine glycosylation is found at asparagine 139, asparagine 169, and asparagine 251. Histidine 426–arginine 428 contributes to the substrate binding site. N-linked (GlcNAc...) asparagine glycans are attached at residues asparagine 464, asparagine 546, and asparagine 607.

Belongs to the glycosyltransferase GT106 family.

It is found in the membrane. Its pathway is glycan metabolism. The chain is O-fucosyltransferase 15 from Arabidopsis thaliana (Mouse-ear cress).